A 522-amino-acid chain; its full sequence is Wax ester synthase/diacylglycerol acyltransferase 4 (522 aa).

The segment covering 1-12 (MEIETRPHISGD) has biased composition (basic and acidic residues). The tract at residues 1–20 (MEIETRPHISGDEKEEEQPL) is disordered. Residues 1-205 (MEIETRPHIS…SDSRLLWLVK (205 aa)) lie on the Cytoplasmic side of the membrane. Histidine 149 (proton acceptor) is an active-site residue. Residues 206–226 (VIWTAVILGLNTVCDALEFIV) traverse the membrane as a helical segment. Topologically, residues 227–522 (TTLFVKDTET…QIAGLLYRML (296 aa)) are lumenal. Residues asparagine 270 and asparagine 409 are each glycosylated (N-linked (GlcNAc...) asparagine).

This sequence in the N-terminal section; belongs to the long-chain O-acyltransferase family. In terms of tissue distribution, mostly expressed in roots, flowers and siliques.

It is found in the cell membrane. It localises to the endoplasmic reticulum membrane. The catalysed reaction is an acyl-CoA + a 1,2-diacyl-sn-glycerol = a triacyl-sn-glycerol + CoA. It carries out the reaction a long chain fatty alcohol + a fatty acyl-CoA = a wax ester + CoA. It participates in glycerolipid metabolism; triacylglycerol biosynthesis. The protein operates within lipid metabolism. Functionally, bifunctional wax ester synthase/diacylglycerol acyltransferase. Involved in cuticular wax biosynthesis. The sequence is that of Wax ester synthase/diacylglycerol acyltransferase 4 from Arabidopsis thaliana (Mouse-ear cress).